The sequence spans 229 residues: Uracil-DNA glycosylase (229 aa).

Asp65 acts as the Proton acceptor in catalysis.

Belongs to the uracil-DNA glycosylase (UDG) superfamily. UNG family.

The protein resides in the cytoplasm. The enzyme catalyses Hydrolyzes single-stranded DNA or mismatched double-stranded DNA and polynucleotides, releasing free uracil.. In terms of biological role, excises uracil residues from the DNA which can arise as a result of misincorporation of dUMP residues by DNA polymerase or due to deamination of cytosine. This Limosilactobacillus reuteri (strain DSM 20016) (Lactobacillus reuteri) protein is Uracil-DNA glycosylase.